A 507-amino-acid chain; its full sequence is Mitochondrial antiviral-signaling protein (507 aa).

Topologically, residues 1-482 are cytoplasmic; sequence MTFAEEKTYK…PCASSVSWAK (482 aa). Glycyl lysine isopeptide (Lys-Gly) (interchain with G-Cter in ubiquitin) cross-links involve residues lysine 7 and lysine 10. Residues 10–77 form the CARD domain; it reads KYIRYNHSKF…WVEVFIRALR (68 aa). The interval 10–77 is required for interaction with NLRX1; the sequence is KYIRYNHSKF…WVEVFIRALR (68 aa). Cysteine 79 carries S-palmitoyl cysteine lipidation. Disordered regions lie at residues 123–238, 250–326, and 350–401; these read FAAG…TNLS, TTLS…NIAP, and ASAS…SKPG. Residues 143-147 are interaction with TRAF2; sequence PVQDT. Residues serine 152, serine 157, serine 172, serine 178, serine 186, and serine 220 each carry the phosphoserine modification. Residues 153–158 are interaction with TRAF6; sequence PVENSE. At arginine 234 the chain carries Asymmetric dimethylarginine. Low complexity-rich tracts occupy residues 250–266 and 281–293; these read TTLSSSSTGSAFAKGAG and VPTNSVTTSSVPS. Residue serine 256 is modified to Phosphoserine. The segment covering 300–325 has biased composition (polar residues); the sequence is NTMSSKLPISTKSTAATPSTVPTNIA. A Glycyl lysine isopeptide (Lys-Gly) (interchain with G-Cter in ubiquitin) cross-link involves residue lysine 305. Residues 340–507 are interaction with DHX33; sequence PSKVTASVAK…MLYRSRHLAQ (168 aa). Residues 359-368 are compositionally biased toward basic and acidic residues; the sequence is RNNKQAKETL. Residues 374 to 391 show a composition bias toward polar residues; that stretch reads VVTTGSSLTRPDISSRSL. Residue serine 387 is modified to Phosphoserine. Residues 419 to 422 carry the pLxIS motif motif; it reads LAIS. Residue serine 422 is modified to Phosphoserine; by TBK1. The segment at 423–474 is disordered; sequence PSTSLGSEPNHGPEENEYSSFRIQVDKSPSVDLLGSPEPLATQQSPEEEEPC. An interaction with TRAF6 region spans residues 435 to 440; the sequence is PEENEY. A helical membrane pass occupies residues 483 to 500; it reads WLGATSALLAAFLAVMLY. The Mitochondrial intermembrane segment spans residues 501-507; sequence RSRHLAQ.

Self-associates and polymerizes (via CARD domains) to form 400 nM long three-stranded helical filaments on mitochondria, filament nucleation requires interaction with RIGI whose CARD domains act as a template for filament assembly. Interacts with RIGI, IFIH1/MDA5, TRAF2, TRAF6 and C1QBP. May interact with FADD, RIPK1, CHUK and IKBKB. Interacts (when phosphorylated) with IRF3; following activation and phosphorylation on the pLxIS motif by TBK1, recruits IRF3. Interacts with NLRX1. Interaction with NLRX1 requires the CARD domain. Interacts with PSMA7. Interacts with TRAFD1. Interacts (via C-terminus) with PCBP2 in a complex containing MAVS/IPS1, PCBP2 and ITCH. Interacts with CYLD. Interacts with SRC. Interacts with DHX58/LGP2 and IKBKE. Interacts with STING1. Interacts with IFIT3 (via N-terminus). Interacts with TBK1 only in the presence of IFIT3. Interacts with TTLL12; the interaction prevents MAVS binding to TBK1 and IKBKE. Interacts with MUL1. Interacts with ANKRD17. Interacts with NDFIP1. Interacts with SMURF1; the interaction is mediated by NDFIP1 and leads to MAVS ubiquitination and degradation. Interacts with UBXN1; this interaction inhibits MAVS-mediated antiviral pathway. Interacts (via C-terminus) with GPATCH3; the interaction is markedly increased upon viral infection. Directly interacts (via CARD domain) with ATG5 and ATG12, either as ATG5 and ATG12 monomers or as ATG12-ATG5 conjugates. Interacts with DHX33 (via the helicase C-terminal domain). Interacts with DDX3X (via C-terminus); this interaction may occur rapidly, but transiently after viral infection. The interaction with DDX3X potentiates MAVS-mediated IFNB induction. Conversely inhibition of this interaction prevents MAVS-mediated IFNB induction. Transiently interacts with TRAF3 early during viral infection. Interacts with CLPB. Interacts with TRAF3IP3. Interacts with TOMM70; the interaction is enhanced by virus infection. Interacts with ZNFX1. Interacts with DHX15. Interacts with N4BP3; this interaction promotes the polyubiquitination of MAVS. Interacts with TAX1BP1; this interaction induces MAVS polyubiquitination. Interacts with NLRP3; promoting NLRP3 recruitment to mitochondria and activation of the NLRP3 inflammasome. Interacts with ECSIT; this interaction bridges RIGI to the MAVS complex at the mitochondrion. Interacts with UBL7; this interaction promotes MAVS 'Lys-27'-linked ubiquitination leading to type I interferon production. Interacts (via transmembrane domain) with SMIM30/MAVI1 (via transmembrane domain); the interaction disrupts MAVS interaction with RIGI and inhibits MAVS aggregation, resulting in the repression of type I interferon signaling and innate immune responses. Post-translationally, following activation, phosphorylated by TBK1 at Ser-422 in the pLxIS motif. The phosphorylated pLxIS motif constitutes an IRF3-binding motif, leading to recruitment of the transcription factor IRF3 to induce type-I interferons and other cytokines. In terms of processing, ubiquitinated. Undergoes 'Lys-48'-linked polyubiquitination catalyzed by ITCH; ITCH-dependent polyubiquitination is mediated by the interaction with PCBP2 and leads to MAVS/IPS1 proteasomal degradation. Ubiquitinated by RNF125, leading to its degradation by the proteasome. Undergoes 'Lys-48'-linked ubiquitination catalyzed by SMURF1. Undergoes 'Lys-48'-linked ubiquitination catalyzed by MARCHF5 at Lys-7, leading to proteasomal degradation. Ubiquitinated via 'Lys-63'-linked ubiquitination at Lys-10 by TRIM31, promoting MAVS polymerization and formation of three-stranded helical filaments on mitochondria. Undergoes 'Lys-63'-linked ubiquitination leading to enhanced interaction between MAVS and TRAF2. Undergoes 'Lys-27'-linked ubiquitination by UBE2N and TRIM21 leading to enhanced interaction between MAVS and TBK1. Deubiquitinated by USP10 leading to attenuation of RIGI-mediated MAVS aggregation and production of type I interferon. Undergoes 'Lys-48'-linked polyubiquitination catalyzed by RNF115 leading to its degradation. Proteolytically cleaved by apoptotic caspases during apoptosis, leading to its inactivation. Cleavage by CASP3 during virus-induced apoptosis inactivates it, preventing cytokine overproduction. Post-translationally, palmitoylated by ZHDDC4. Palmitoylation promotes MAVS stabilization and activation by inhibiting 'Lys-48'- but facilitating 'Lys-63'-linked ubiquitination.

The protein localises to the mitochondrion outer membrane. The protein resides in the mitochondrion. Its subcellular location is the peroxisome. Its function is as follows. Adapter required for innate immune defense against viruses. Acts downstream of DHX33, RIGI and IFIH1/MDA5, which detect intracellular dsRNA produced during viral replication, to coordinate pathways leading to the activation of NF-kappa-B, IRF3 and IRF7, and to the subsequent induction of antiviral cytokines such as IFN-beta and RANTES (CCL5). Peroxisomal and mitochondrial MAVS act sequentially to create an antiviral cellular state. Upon viral infection, peroxisomal MAVS induces the rapid interferon-independent expression of defense factors that provide short-term protection, whereas mitochondrial MAVS activates an interferon-dependent signaling pathway with delayed kinetics, which amplifies and stabilizes the antiviral response. May activate the same pathways following detection of extracellular dsRNA by TLR3. May protect cells from apoptosis. Involved in NLRP3 inflammasome activation by mediating NLRP3 recruitment to mitochondria. The chain is Mitochondrial antiviral-signaling protein (Mavs) from Rattus norvegicus (Rat).